The following is a 236-amino-acid chain: NADH-quinone oxidoreductase subunit C (236 aa).

The disordered stretch occupies residues 1 to 20 (MSPPNQDAQEGRPDSPTAEV).

It belongs to the complex I 30 kDa subunit family. As to quaternary structure, NDH-1 is composed of 14 different subunits. Subunits NuoB, C, D, E, F, and G constitute the peripheral sector of the complex.

The protein resides in the cell membrane. The enzyme catalyses a quinone + NADH + 5 H(+)(in) = a quinol + NAD(+) + 4 H(+)(out). NDH-1 shuttles electrons from NADH, via FMN and iron-sulfur (Fe-S) centers, to quinones in the respiratory chain. The immediate electron acceptor for the enzyme in this species is believed to be a menaquinone. Couples the redox reaction to proton translocation (for every two electrons transferred, four hydrogen ions are translocated across the cytoplasmic membrane), and thus conserves the redox energy in a proton gradient. The chain is NADH-quinone oxidoreductase subunit C from Mycobacterium tuberculosis (strain ATCC 25177 / H37Ra).